Consider the following 207-residue polypeptide: Cytochrome c biogenesis ATP-binding export protein CcmA (207 aa).

One can recognise an ABC transporter domain in the interval 4–207; the sequence is LEVRELLCER…RISLTQTRAV (204 aa). 36-43 lines the ATP pocket; sequence GSNGAGKT.

The protein belongs to the ABC transporter superfamily. CcmA exporter (TC 3.A.1.107) family. As to quaternary structure, the complex is composed of two ATP-binding proteins (CcmA) and two transmembrane proteins (CcmB).

It localises to the cell inner membrane. The catalysed reaction is heme b(in) + ATP + H2O = heme b(out) + ADP + phosphate + H(+). Its function is as follows. Part of the ABC transporter complex CcmAB involved in the biogenesis of c-type cytochromes; once thought to export heme, this seems not to be the case, but its exact role is uncertain. Responsible for energy coupling to the transport system. This Escherichia coli O157:H7 protein is Cytochrome c biogenesis ATP-binding export protein CcmA.